The primary structure comprises 222 residues: Leucyl/phenylalanyl-tRNA--protein transferase (222 aa).

It belongs to the L/F-transferase family.

The protein localises to the cytoplasm. The enzyme catalyses N-terminal L-lysyl-[protein] + L-leucyl-tRNA(Leu) = N-terminal L-leucyl-L-lysyl-[protein] + tRNA(Leu) + H(+). It catalyses the reaction N-terminal L-arginyl-[protein] + L-leucyl-tRNA(Leu) = N-terminal L-leucyl-L-arginyl-[protein] + tRNA(Leu) + H(+). It carries out the reaction L-phenylalanyl-tRNA(Phe) + an N-terminal L-alpha-aminoacyl-[protein] = an N-terminal L-phenylalanyl-L-alpha-aminoacyl-[protein] + tRNA(Phe). Functionally, functions in the N-end rule pathway of protein degradation where it conjugates Leu, Phe and, less efficiently, Met from aminoacyl-tRNAs to the N-termini of proteins containing an N-terminal arginine or lysine. The protein is Leucyl/phenylalanyl-tRNA--protein transferase of Legionella pneumophila (strain Paris).